The primary structure comprises 86 residues: Selenoprotein W (86 aa).

The segment at residues 10–13 is a cross-link (cysteinyl-selenocysteine (Cys-Sec); redox-active); that stretch reads CGGU. Residue Sec-13 is a non-standard amino acid, selenocysteine.

It belongs to the SelWTH family. Selenoprotein W subfamily.

The protein localises to the cytoplasm. In terms of biological role, plays a role as a glutathione (GSH)-dependent antioxidant. May be involved in a redox-related process. May play a role in the myopathies of selenium deficiency. This Danio rerio (Zebrafish) protein is Selenoprotein W.